A 2863-amino-acid chain; its full sequence is Lipopolysaccharide-responsive and beige-like anchor protein (2863 aa).

3 disordered regions span residues Met1–Leu35, Val969–Ser1005, and Glu1018–Thr1039. Ala2 carries the N-acetylalanine modification. Ser10, Ser979, and Ser1003 each carry phosphoserine. Residues Phe985–Ser1005 are compositionally biased toward polar residues. The stretch at Asn1006–Asp1053 forms a coiled coil. The segment covering Glu1024–Leu1034 has biased composition (acidic residues). Ser1100, Ser1135, and Ser1139 each carry phosphoserine. Positions Pro1161 to Asp1176 are enriched in basic and acidic residues. The disordered stretch occupies residues Pro1161–Glu1193. Polar residues predominate over residues Ser1177 to Glu1193. Phosphoserine is present on residues Ser1233, Ser1247, and Ser1261. The WD 1 repeat unit spans residues Ser1301–Asp1343. A phosphoserine mark is found at Ser1488 and Ser1498. A helical transmembrane segment spans residues Phe1531 to Tyr1548. Positions Leu1586–Ser1599 are enriched in low complexity. 2 disordered regions span residues Leu1586 to Pro1668 and Gln1759 to Asp1789. Phosphoserine is present on Ser1605. Over residues Lys1650–Thr1664 the composition is skewed to basic and acidic residues. Phosphoserine is present on residues Ser1767, Ser1770, and Ser2064. Over residues Gly1769–Asp1789 the composition is skewed to polar residues. Positions Asn2073–Pro2181 constitute a BEACH-type PH domain. Positions Ala2200–Arg2489 constitute a BEACH domain. Ser2496 is subject to Phosphoserine. WD repeat units follow at residues Asp2591–Val2633, Gly2636–Gly2679, Gly2695–Glu2735, Glu2777–Ala2816, and Gly2819–Glu2858.

In terms of assembly, interacts with TOM1 and TOLLIP. As to expression, ubiquitous.

It is found in the cell membrane. The protein resides in the endoplasmic reticulum membrane. The protein localises to the golgi apparatus. It localises to the trans-Golgi network membrane. Its subcellular location is the lysosome membrane. Its function is as follows. Involved in coupling signal transduction and vesicle trafficking to enable polarized secretion and/or membrane deposition of immune effector molecules. Involved in phagophore growth during mitophagy by regulating ATG9A trafficking to mitochondria. This chain is Lipopolysaccharide-responsive and beige-like anchor protein, found in Homo sapiens (Human).